We begin with the raw amino-acid sequence, 335 residues long: Anthranilate phosphoribosyltransferase 2 (335 aa).

5-phospho-alpha-D-ribose 1-diphosphate-binding positions include G70, 73–74, T78, 80–83, 98–106, and S110; these read GD, NIST, and KHGNRSASS. G70 lines the anthranilate pocket. S82 contacts Mg(2+). Residue N101 participates in anthranilate binding. Residue R156 participates in anthranilate binding. D215 and E216 together coordinate Mg(2+).

Belongs to the anthranilate phosphoribosyltransferase family. In terms of assembly, homodimer. Mg(2+) serves as cofactor.

It carries out the reaction N-(5-phospho-beta-D-ribosyl)anthranilate + diphosphate = 5-phospho-alpha-D-ribose 1-diphosphate + anthranilate. It participates in amino-acid biosynthesis; L-tryptophan biosynthesis; L-tryptophan from chorismate: step 2/5. Its function is as follows. Catalyzes the transfer of the phosphoribosyl group of 5-phosphorylribose-1-pyrophosphate (PRPP) to anthranilate to yield N-(5'-phosphoribosyl)-anthranilate (PRA). In Streptomyces coelicolor (strain ATCC BAA-471 / A3(2) / M145), this protein is Anthranilate phosphoribosyltransferase 2.